A 485-amino-acid chain; its full sequence is Adenosylhomocysteinase (485 aa).

Substrate contacts are provided by threonine 60, aspartate 146, and glutamate 208. Residue 209 to 211 coordinates NAD(+); it reads TTT. Positions 238 and 242 each coordinate substrate. Residues asparagine 243, 272–277, glutamate 295, asparagine 330, 351–353, and asparagine 399 each bind NAD(+); these read GYGDVG and IGH.

The protein belongs to the adenosylhomocysteinase family. NAD(+) serves as cofactor.

Its subcellular location is the cytoplasm. It carries out the reaction S-adenosyl-L-homocysteine + H2O = L-homocysteine + adenosine. It participates in amino-acid biosynthesis; L-homocysteine biosynthesis; L-homocysteine from S-adenosyl-L-homocysteine: step 1/1. May play a key role in the regulation of the intracellular concentration of adenosylhomocysteine. The chain is Adenosylhomocysteinase from Streptomyces griseus subsp. griseus (strain JCM 4626 / CBS 651.72 / NBRC 13350 / KCC S-0626 / ISP 5235).